Consider the following 251-residue polypeptide: MVDQTKQTTHFGFRTVAKDEKAGMVAEVFHSVAAKYDLMNDLMSFGIHRIWKRVAIDASGVRRGQRILDLAGGTGDLTAKFSRIVGEKGEVVLADINESMLKVGREKLRDVGIVGNVSYVQANAEALPFPDNYFNCITISFGLRNVTEKEKALRSMFRVLKPGGRLLVLEFSKPLFAPLSKAYDAYSFHVLPKIGQVFVQDAGSYRYLAESIRMHPDQDTLKTMMEEAGFEQVTYTNMTGGIVALHRGFKF.

Residues threonine 74, aspartate 95, 123–124 (NA), and serine 140 contribute to the S-adenosyl-L-methionine site.

Belongs to the class I-like SAM-binding methyltransferase superfamily. MenG/UbiE family.

It carries out the reaction a 2-demethylmenaquinol + S-adenosyl-L-methionine = a menaquinol + S-adenosyl-L-homocysteine + H(+). It catalyses the reaction a 2-methoxy-6-(all-trans-polyprenyl)benzene-1,4-diol + S-adenosyl-L-methionine = a 5-methoxy-2-methyl-3-(all-trans-polyprenyl)benzene-1,4-diol + S-adenosyl-L-homocysteine + H(+). The protein operates within quinol/quinone metabolism; menaquinone biosynthesis; menaquinol from 1,4-dihydroxy-2-naphthoate: step 2/2. It participates in cofactor biosynthesis; ubiquinone biosynthesis. Methyltransferase required for the conversion of demethylmenaquinol (DMKH2) to menaquinol (MKH2) and the conversion of 2-polyprenyl-6-methoxy-1,4-benzoquinol (DDMQH2) to 2-polyprenyl-3-methyl-6-methoxy-1,4-benzoquinol (DMQH2). This chain is Ubiquinone/menaquinone biosynthesis C-methyltransferase UbiE, found in Photorhabdus laumondii subsp. laumondii (strain DSM 15139 / CIP 105565 / TT01) (Photorhabdus luminescens subsp. laumondii).